The following is a 107-amino-acid chain: Essential MCU regulator, mitochondrial (107 aa).

The N-terminal 47 residues, 1–47 (MASTAARRLAWVAVRPGALWSGPRGRRGGDVYTVPGSSGLSQVPSRS), are a transit peptide targeting the mitochondrion. Residues 48 to 65 (VIVTRSGAILPKPVKMSF) lie on the Mitochondrial matrix side of the membrane. Residues 66–85 (GLLRVFSIVIPFLYVGTLIS) form a helical membrane-spanning segment. Residues 81-85 (GTLIS) carry the GXXXX[G/A/S] motif. Residues 86–107 (KNFAALLEEHDIFVPEDDDDDD) are Mitochondrial intermembrane-facing.

Belongs to the SMDT1/EMRE family. Component of the uniplex complex, composed of MCU, EMRE/SMDT1, MICU1 and MICU2 (or MICU3) in a 4:4:1:1 stoichiometry. The number of EMRE/SMDT1 molecules is hovewer variable, ranging from 1 to 4 copies per uniplex complex, leading to uniplex complexes with distinct gatekeeping profiles. Interacts (via its C-terminal poly-Asp tail) with MCUR1; the interaction is direct. Unprocessed form interacts (via transit peptide) with MAIP1. Undergoes proteolytic degradation in neurons: degraded by AFG3L2 and SPG7 before SMDT1/EMRE assembly with the uniporter complex, limiting the availability of SMDT1/EMRE for MCU assembly and promoting efficient assembly of gatekeeper subunits with MCU. Widely expressed.

Its subcellular location is the mitochondrion inner membrane. Essential regulatory subunit of the mitochondrial calcium uniporter complex (uniplex), a complex that mediates calcium uptake into mitochondria. Required to bridge the calcium-sensing proteins MICU1 with the calcium-conducting subunit MCU. Acts by mediating activation of MCU and retention of MICU1 to the MCU pore, in order to ensure tight regulation of the uniplex complex and appropriate responses to intracellular calcium signaling. The protein is Essential MCU regulator, mitochondrial of Mus musculus (Mouse).